The sequence spans 225 residues: Enolase-phosphatase E1 (225 aa).

Belongs to the HAD-like hydrolase superfamily. MasA/MtnC family. As to quaternary structure, monomer. Mg(2+) serves as cofactor.

The enzyme catalyses 5-methylsulfanyl-2,3-dioxopentyl phosphate + H2O = 1,2-dihydroxy-5-(methylsulfanyl)pent-1-en-3-one + phosphate. The protein operates within amino-acid biosynthesis; L-methionine biosynthesis via salvage pathway; L-methionine from S-methyl-5-thio-alpha-D-ribose 1-phosphate: step 3/6. Its pathway is amino-acid biosynthesis; L-methionine biosynthesis via salvage pathway; L-methionine from S-methyl-5-thio-alpha-D-ribose 1-phosphate: step 4/6. Its function is as follows. Bifunctional enzyme that catalyzes the enolization of 2,3-diketo-5-methylthiopentyl-1-phosphate (DK-MTP-1-P) into the intermediate 2-hydroxy-3-keto-5-methylthiopentenyl-1-phosphate (HK-MTPenyl-1-P), which is then dephosphorylated to form the acireductone 1,2-dihydroxy-3-keto-5-methylthiopentene (DHK-MTPene). In Pseudomonas aeruginosa (strain LESB58), this protein is Enolase-phosphatase E1.